The following is a 190-amino-acid chain: Potassium-transporting ATPase KdpC subunit (190 aa).

The helical transmembrane segment at Val13 to Phe33 threads the bilayer.

The protein belongs to the KdpC family. In terms of assembly, the system is composed of three essential subunits: KdpA, KdpB and KdpC.

The protein localises to the cell membrane. Its function is as follows. Part of the high-affinity ATP-driven potassium transport (or Kdp) system, which catalyzes the hydrolysis of ATP coupled with the electrogenic transport of potassium into the cytoplasm. This subunit acts as a catalytic chaperone that increases the ATP-binding affinity of the ATP-hydrolyzing subunit KdpB by the formation of a transient KdpB/KdpC/ATP ternary complex. This is Potassium-transporting ATPase KdpC subunit from Listeria monocytogenes serotype 4b (strain CLIP80459).